Here is a 385-residue protein sequence, read N- to C-terminus: Putative ribosomal RNA large subunit methyltransferase MJ1653 (385 aa).

The 80-residue stretch at 2–81 folds into the PUA domain; that stretch reads TTKLYVDFGG…LDENYIREKI (80 aa).

The protein belongs to the methyltransferase superfamily. RlmI family.

The protein resides in the cytoplasm. The sequence is that of Putative ribosomal RNA large subunit methyltransferase MJ1653 from Methanocaldococcus jannaschii (strain ATCC 43067 / DSM 2661 / JAL-1 / JCM 10045 / NBRC 100440) (Methanococcus jannaschii).